A 538-amino-acid chain; its full sequence is MNLQILLLLLLFCHVAAVCRDTETCIERVKEVVAAPRRFWFGEQRSALCSNRNAKSLECGGPPQLASFHSIASRLFRVKTYHSAYLRNLYIFPRVTYRASPGHYRACEHDFFSGNTSAVQADPDMDPVEPFRIRKRPEITWSGLQYDEQYTVVITDVGYATINFLAVDFPKATKILKDYEPTENYRPSPNPMVVLVFRNGRADIESPKSEEDFNLPQFMLKHELEDDLVGLSLIVASSDPFAIEKQRLRGKVDYCHSLLQKRLASNPPRHHTILHRLPIDEIDSWLSVSFDQHQVNGNVCCQRIKLPKTSIFLDPLGDVSISALTTLTPPSISSMRISSSQSNYINYHRQTRNFVELSNEKFSLAIIDAHHGHLHWLEVDIPAANLNAANGNGLTKADYVPLIPKKPSTCHSYLFVLLAQPASMQTLESYCEGMCETRKKFRLELFKQQHGLRLSALSTVSSCYDLPYAYHILMKDASQNRTMERRGSKHRSSLYSDMSSEVCAAFHVSPHHKCPISQSSFTVSIIGAVFLVVLAHLF.

An N-terminal signal peptide occupies residues 1–17; the sequence is MNLQILLLLLLFCHVAA. Asn-115 carries N-linked (GlcNAc...) asparagine glycosylation.

This is an uncharacterized protein from Caenorhabditis elegans.